The chain runs to 476 residues: Chromosomal replication initiator protein DnaA (476 aa).

The domain I, interacts with DnaA modulators stretch occupies residues 1-87 (MSDRSDPTHA…AGVSNFAIVV (87 aa)). The tract at residues 87 to 131 (VNPGIAQDAFAQHPEPAEQPYIETPTITAPTDNPGLPASPSRGDS) is domain II. Residues 132–348 (RLNPKYGFDT…GTLIRVTAFA (217 aa)) form a domain III, AAA+ region region. ATP contacts are provided by Gly-176, Gly-178, Lys-179, and Thr-180. A domain IV, binds dsDNA region spans residues 349–476 (SLNKTPVDLA…IKQNHRYGKM (128 aa)).

It belongs to the DnaA family. Oligomerizes as a right-handed, spiral filament on DNA at oriC.

It is found in the cytoplasm. Plays an essential role in the initiation and regulation of chromosomal replication. ATP-DnaA binds to the origin of replication (oriC) to initiate formation of the DNA replication initiation complex once per cell cycle. Binds the DnaA box (a 9 base pair repeat at the origin) and separates the double-stranded (ds)DNA. Forms a right-handed helical filament on oriC DNA; dsDNA binds to the exterior of the filament while single-stranded (ss)DNA is stabiized in the filament's interior. The ATP-DnaA-oriC complex binds and stabilizes one strand of the AT-rich DNA unwinding element (DUE), permitting loading of DNA polymerase. After initiation quickly degrades to an ADP-DnaA complex that is not apt for DNA replication. Binds acidic phospholipids. In Clavibacter sepedonicus (Clavibacter michiganensis subsp. sepedonicus), this protein is Chromosomal replication initiator protein DnaA.